The sequence spans 256 residues: Membrane-anchored junction protein (256 aa).

Residues 1–232 lie on the Nuclear side of the membrane; that stretch reads MSLKPFTYPF…HSSPPPPKEP (232 aa). 2 disordered regions span residues 143-197 and 211-235; these read KRKL…TPAS and HGLQ…PGAR. Positions 164-173 are enriched in polar residues; that stretch reads ETSSEASSNK. Residues 175–184 show a composition bias toward basic and acidic residues; sequence PLKESKRSTD. The chain crosses the membrane as a helical span at residues 233-251; it reads GARGFLGFLSALFPFRYFF. Topologically, residues 252 to 256 are perinuclear space; sequence KKSGQ.

This sequence belongs to the MAJIN family. Component of the MAJIN-TERB1-TERB2 complex, composed of MAJIN, TERB1 and TERB2. Specifically expressed in germline tissues.

It localises to the nucleus inner membrane. It is found in the chromosome. The protein localises to the telomere. Meiosis-specific telomere-associated protein involved in meiotic telomere attachment to the nucleus inner membrane, a crucial step for homologous pairing and synapsis. Component of the MAJIN-TERB1-TERB2 complex, which promotes telomere cap exchange by mediating attachment of telomeric DNA to the inner nuclear membrane and replacement of the protective cap of telomeric chromosomes: in early meiosis, the MAJIN-TERB1-TERB2 complex associates with telomeric DNA and the shelterin/telosome complex. During prophase, the complex matures and promotes release of the shelterin/telosome complex from telomeric DNA. In the complex, MAJIN acts as the anchoring subunit to the nucleus inner membrane. MAJIN shows DNA-binding activity, possibly for the stabilization of telomere attachment on the nucleus inner membrane. This Mus musculus (Mouse) protein is Membrane-anchored junction protein.